We begin with the raw amino-acid sequence, 227 residues long: Pectinesterase inhibitor 28 (227 aa).

The first 25 residues, 1 to 25 (MASSMAPAAAMAILLLALLMPATLC), serve as a signal peptide directing secretion. The tract at residues 28–50 (SGPPSSKHGHGGHAKRAPPPASP) is disordered. Basic residues predominate over residues 34-43 (KHGHGGHAKR). An intrachain disulfide couples Cys66 to Cys75. Residues Asn67, Asn104, and Asn117 are each glycosylated (N-linked (GlcNAc...) asparagine). Cys139 and Cys179 are oxidised to a cystine.

It belongs to the PMEI family. In terms of tissue distribution, expressed in roots, leaves, culms and flag leaves.

It is found in the secreted. The protein resides in the extracellular space. The protein localises to the apoplast. Pectin methylesterase (PME) inhibitor that inhibits PME in vitro. Functions as a critical structural modulator by regulating the degree of pectin methylesterification and the physiochemical properties of the cell wall components. This Oryza sativa subsp. japonica (Rice) protein is Pectinesterase inhibitor 28.